We begin with the raw amino-acid sequence, 377 residues long: Nitric oxide reductase FlRd-NAD(+) reductase (377 aa).

This sequence belongs to the FAD-dependent oxidoreductase family. FAD is required as a cofactor.

The protein resides in the cytoplasm. It carries out the reaction 2 reduced [nitric oxide reductase rubredoxin domain] + NAD(+) + H(+) = 2 oxidized [nitric oxide reductase rubredoxin domain] + NADH. It participates in nitrogen metabolism; nitric oxide reduction. Functionally, one of at least two accessory proteins for anaerobic nitric oxide (NO) reductase. Reduces the rubredoxin moiety of NO reductase. This Enterobacter sp. (strain 638) protein is Nitric oxide reductase FlRd-NAD(+) reductase.